The primary structure comprises 120 residues: Fluoride-specific ion channel FluC (120 aa).

Transmembrane regions (helical) follow at residues 30-50, 66-86, and 96-116; these read FGTL…YGLL, VGFL…LLLL, and LNII…LQLV. 2 residues coordinate Na(+): Gly70 and Thr73.

Belongs to the fluoride channel Fluc/FEX (TC 1.A.43) family.

Its subcellular location is the cell inner membrane. The catalysed reaction is fluoride(in) = fluoride(out). Its activity is regulated as follows. Na(+) is not transported, but it plays an essential structural role and its presence is essential for fluoride channel function. Fluoride-specific ion channel. Important for reducing fluoride concentration in the cell, thus reducing its toxicity. The polypeptide is Fluoride-specific ion channel FluC (Pseudoalteromonas translucida (strain TAC 125)).